The primary structure comprises 282 residues: MSIQEVRPNNTIYINNLNEKIKKDELKKSLYAIFSQFGQILDILVSRNLKMRGQAFVIFKETSSATNALRSMQGFPFYDKPMRIQYSKTDSDIIAKMKGTFVERDRKRQEKRKVKVPEVQGVKNAMPGAALLPGVPGQMAAMQDMPGMTQAPRMMHMAGQAPYMHHPGMMPPPGMAPGQMPPGGMPHGQLMPGQMAPMQPISENPPNHILFLTNLPEETNELMLSMLFNQFPGFKEVRLVPGRHDIAFVEFDNEVQAGAARESLQGFKITQSNSMKISFAKK.

RRM domains lie at 10–89 (NTIY…YSKT) and 208–282 (HILF…FAKK).

It belongs to the RRM U1 A/B'' family. In terms of assembly, U1 snRNP is composed of the 7 core Sm proteins snrpb, snrpd1, snrpd2, snrpd3, snrpe, snrpf and snrpg that assemble in a heptameric protein ring on the Sm site of the small nuclear RNA to form the core snRNP, and at least three U1 snRNP-specific proteins snrnp70/U1-70K, snrpa/U1-A and snrpc/U1-C.

The protein resides in the nucleus. Functionally, component of the spliceosomal U1 snRNP, which is essential for recognition of the pre-mRNA 5' splice-site and the subsequent assembly of the spliceosome. U1 snRNP is the first snRNP to interact with pre-mRNA. This interaction is required for the subsequent binding of U2 snRNP and the U4/U6/U5 tri-snRNP. Snrpa binds stem loop II of U1 snRNA. This chain is U1 small nuclear ribonucleoprotein A (snrpa), found in Xenopus laevis (African clawed frog).